Here is a 90-residue protein sequence, read N- to C-terminus: Acylphosphatase (90 aa).

The 86-residue stretch at 5-90 (CVKASVKGIV…WRHIDGFEIK (86 aa)) folds into the Acylphosphatase-like domain. Residues Arg20 and Asn38 contribute to the active site.

It belongs to the acylphosphatase family.

It catalyses the reaction an acyl phosphate + H2O = a carboxylate + phosphate + H(+). In Photobacterium profundum (strain SS9), this protein is Acylphosphatase (acyP).